The primary structure comprises 112 residues: MATSCNLADRQCTPCEGGIAPLENSVAAVMLDTLPGWTLDGQRLDKTYVFRNHYEAMAFVNAIAWVSHRENHHPELIVGYKDVRVRYWTHAIGGLSENDFICAAKLEKLLEI.

This sequence belongs to the pterin-4-alpha-carbinolamine dehydratase family.

It catalyses the reaction (4aS,6R)-4a-hydroxy-L-erythro-5,6,7,8-tetrahydrobiopterin = (6R)-L-erythro-6,7-dihydrobiopterin + H2O. This chain is Putative pterin-4-alpha-carbinolamine dehydratase, found in Dechloromonas aromatica (strain RCB).